A 366-amino-acid chain; its full sequence is Cobalt-precorrin-5B C(1)-methyltransferase (366 aa).

Belongs to the CbiD family.

It carries out the reaction Co-precorrin-5B + S-adenosyl-L-methionine = Co-precorrin-6A + S-adenosyl-L-homocysteine. The protein operates within cofactor biosynthesis; adenosylcobalamin biosynthesis; cob(II)yrinate a,c-diamide from sirohydrochlorin (anaerobic route): step 6/10. Catalyzes the methylation of C-1 in cobalt-precorrin-5B to form cobalt-precorrin-6A. This is Cobalt-precorrin-5B C(1)-methyltransferase from Thermoanaerobacter sp. (strain X514).